Reading from the N-terminus, the 122-residue chain is Urease subunit beta (122 aa).

It belongs to the urease beta subunit family. As to quaternary structure, heterotrimer of UreA (gamma), UreB (beta) and UreC (alpha) subunits. Three heterotrimers associate to form the active enzyme.

The protein resides in the cytoplasm. It carries out the reaction urea + 2 H2O + H(+) = hydrogencarbonate + 2 NH4(+). The protein operates within nitrogen metabolism; urea degradation; CO(2) and NH(3) from urea (urease route): step 1/1. This chain is Urease subunit beta, found in Acetivibrio thermocellus (strain ATCC 27405 / DSM 1237 / JCM 9322 / NBRC 103400 / NCIMB 10682 / NRRL B-4536 / VPI 7372) (Clostridium thermocellum).